The chain runs to 1239 residues: MVHPVQVGKRTRMSFSRLKEVGQMPNLIEVQLDSYDWFLKEGLQEVFDDINPIQDYTGNLNLEFVGYKLDLDSIKYSVEECKERDSTYAAPLKVKVRLLNKETGEIKEQEVFMGDFPLMTEQGTFIINGAERVIVSQLVRSPGVYYDMTVDKTGSKLFSATVIPNRGAWLEYETDSNNIIYVRIDKTRKLPITILARALGYGTDAEIIEFFGEDERLKATIEKDNTKTREEALLEIYKRLRPGEPPTVDSAESLIESLFFDAKRYDLSRVGRYKFNKKLAIHLRITNQIADQDIVNPQTGEILVQKGEKIDKDKAIEIQNCGVNEVYIKIDDKSFKVIGNHFVDIHSLISFDISDLNIKEYVFYPVLKEILDNYADEESIKEEIRKNIYRLIPKHIIREDIYATINYELGLSYDIGYKDDIDHLGNRRLRSVGELLQNQFRIGLSRMERVVKERMTIQDQEVITPQALINIRPVAASIKEFFGSSQLSQFMDQTNPLSELTHKRRLSALGPGGLSRERAGFEVRDVHHSHYGRMCPIETPEGPNIGLINSLATFAKVNEYGFIETPYRRIDPKNKRATNDIVYMTADEEDLYVIARSDEPIDENGYFMDDKVTVRAKEEVLVVPVSEVEYMDISPRQLVSVATAMIPFLENDDASRALMGSNMQRQAVPLLKPQAPIVGTGIEYKAATDSGVLPKAKNAGTVAYVSADEIRVRRDSDGGIDKYKLLKFKRSNQGTCINQRPIVSKGEVVAKETLLADGPSTDLGEIALGKNILMGFITWEGYNYEDAMLISEQLVREDVFTSIHIEEYEAEARDTKLGPEEITRDIPNVGEEALKDIDERGIIRIGAEVRSGDILVGKVTPKGETELTAEERLLRAIFGEKAREVRDTSLRVPHGEAGIIVDVKIFTRENGDELPPGVNKLVRCYIAQKRKISVGDKMAGRHGNKGVISRVLPEEDMPFLPDGRPLQICLNPLGVPSRMNIGQVLEVHLGLAASKLGWHIATPVFDGAIESDIVDCLRKAGYSEDGKTVLYDGRTGEPFDNRVTVGYMYILKLAHLVDDKIHARSTGPYSLVTQQPLGGKAQFGGQRFGEMEVWALEAYGAAHTLQEILTVKSDDVVGRVKTYEAIVKGENIPEPGVPESFKVLIKELQALCLDVKVLNDDNQEIKLKESVDEDVDELEVNIEGAENQLEDKEEKEEEKEENYKEDSDEYDDLREEDVEPDLEELSLDDLDLDDFGDEH.

Positions 1182–1239 (IEGAENQLEDKEEKEEEKEENYKEDSDEYDDLREEDVEPDLEELSLDDLDLDDFGDEH) are disordered. Composition is skewed to acidic residues over residues 1191–1200 (DKEEKEEEKE) and 1206–1239 (DSDE…GDEH).

It belongs to the RNA polymerase beta chain family. As to quaternary structure, the RNAP catalytic core consists of 2 alpha, 1 beta, 1 beta' and 1 omega subunit. When a sigma factor is associated with the core the holoenzyme is formed, which can initiate transcription.

The catalysed reaction is RNA(n) + a ribonucleoside 5'-triphosphate = RNA(n+1) + diphosphate. DNA-dependent RNA polymerase catalyzes the transcription of DNA into RNA using the four ribonucleoside triphosphates as substrates. This is DNA-directed RNA polymerase subunit beta from Clostridium botulinum (strain Loch Maree / Type A3).